Reading from the N-terminus, the 141-residue chain is Hemoglobin subunit alpha (141 aa).

The 141-residue stretch at 1 to 141 (VLSSKDKANI…VSTVLTSKYR (141 aa)) folds into the Globin domain. Ser3 is modified (phosphoserine). N6-succinyllysine is present on residues Lys7 and Lys11. Lys16 carries the N6-acetyllysine; alternate modification. The residue at position 16 (Lys16) is an N6-succinyllysine; alternate. Residue Tyr24 is modified to Phosphotyrosine. Lys40 is subject to N6-succinyllysine. Phosphoserine is present on Ser49. His58 contributes to the O2 binding site. His87 provides a ligand contact to heme b. Ser102 is subject to Phosphoserine. Position 108 is a phosphothreonine (Thr108). Ser124 bears the Phosphoserine mark. A phosphothreonine mark is found at Thr134 and Thr137. Ser138 bears the Phosphoserine mark.

It belongs to the globin family. In terms of assembly, heterotetramer of two alpha chains and two beta chains. Red blood cells.

Functionally, involved in oxygen transport from the lung to the various peripheral tissues. Hemopressin acts as an antagonist peptide of the cannabinoid receptor CNR1. Hemopressin-binding efficiently blocks cannabinoid receptor CNR1 and subsequent signaling. The protein is Hemoglobin subunit alpha (HBA) of Vicugna pacos (Alpaca).